Here is a 349-residue protein sequence, read N- to C-terminus: Carbamoyl phosphate synthase small chain (349 aa).

Residues 1 to 170 are CPSase; the sequence is MKAKLILENG…KYEISGEGKK (170 aa). The L-glutamine site is built by Ser-45, Gly-218, and Gly-220. The region spanning 170–349 is the Glutamine amidotransferase type-1 domain; that stretch reads KVAIIDFGIK…IFDEFMKYAL (180 aa). Cys-245 acts as the Nucleophile in catalysis. Leu-246, Gln-249, Asn-287, Gly-289, and Tyr-290 together coordinate L-glutamine. Active-site residues include His-327 and Glu-329.

Belongs to the CarA family. Composed of two chains; the small (or glutamine) chain promotes the hydrolysis of glutamine to ammonia, which is used by the large (or ammonia) chain to synthesize carbamoyl phosphate. Tetramer of heterodimers (alpha,beta)4.

The enzyme catalyses hydrogencarbonate + L-glutamine + 2 ATP + H2O = carbamoyl phosphate + L-glutamate + 2 ADP + phosphate + 2 H(+). It catalyses the reaction L-glutamine + H2O = L-glutamate + NH4(+). Its pathway is amino-acid biosynthesis; L-arginine biosynthesis; carbamoyl phosphate from bicarbonate: step 1/1. It participates in pyrimidine metabolism; UMP biosynthesis via de novo pathway; (S)-dihydroorotate from bicarbonate: step 1/3. In terms of biological role, small subunit of the glutamine-dependent carbamoyl phosphate synthetase (CPSase). CPSase catalyzes the formation of carbamoyl phosphate from the ammonia moiety of glutamine, carbonate, and phosphate donated by ATP, constituting the first step of 2 biosynthetic pathways, one leading to arginine and/or urea and the other to pyrimidine nucleotides. The small subunit (glutamine amidotransferase) binds and cleaves glutamine to supply the large subunit with the substrate ammonia. The chain is Carbamoyl phosphate synthase small chain from Clostridium perfringens (strain 13 / Type A).